Consider the following 936-residue polypeptide: Protein SIEL (936 aa).

As to quaternary structure, interacts with SHR, MGP, SCR, JKD, CPC, TMO7 and AGL21, but not with LFY or STM.

Its subcellular location is the nucleus. The protein localises to the endosome. It localises to the cytoplasm. It is found in the cell cortex. Intracellular shuttle that promotes movement of SHR from the stele into the endodermis. Required for SHR association to endosomes and localization, and for intercellular movement of SHR. The protein is Protein SIEL of Arabidopsis thaliana (Mouse-ear cress).